Consider the following 293-residue polypeptide: Ribosomal RNA small subunit methyltransferase A (293 aa).

N36, L38, G63, E84, D111, and N132 together coordinate S-adenosyl-L-methionine.

Belongs to the class I-like SAM-binding methyltransferase superfamily. rRNA adenine N(6)-methyltransferase family. RsmA subfamily.

Its subcellular location is the cytoplasm. It carries out the reaction adenosine(1518)/adenosine(1519) in 16S rRNA + 4 S-adenosyl-L-methionine = N(6)-dimethyladenosine(1518)/N(6)-dimethyladenosine(1519) in 16S rRNA + 4 S-adenosyl-L-homocysteine + 4 H(+). Functionally, specifically dimethylates two adjacent adenosines (A1518 and A1519) in the loop of a conserved hairpin near the 3'-end of 16S rRNA in the 30S particle. May play a critical role in biogenesis of 30S subunits. The sequence is that of Ribosomal RNA small subunit methyltransferase A from Treponema denticola (strain ATCC 35405 / DSM 14222 / CIP 103919 / JCM 8153 / KCTC 15104).